The following is a 568-amino-acid chain: Proline--tRNA ligase (568 aa).

Belongs to the class-II aminoacyl-tRNA synthetase family. ProS type 1 subfamily. Homodimer.

The protein resides in the cytoplasm. The catalysed reaction is tRNA(Pro) + L-proline + ATP = L-prolyl-tRNA(Pro) + AMP + diphosphate. Functionally, catalyzes the attachment of proline to tRNA(Pro) in a two-step reaction: proline is first activated by ATP to form Pro-AMP and then transferred to the acceptor end of tRNA(Pro). As ProRS can inadvertently accommodate and process non-cognate amino acids such as alanine and cysteine, to avoid such errors it has two additional distinct editing activities against alanine. One activity is designated as 'pretransfer' editing and involves the tRNA(Pro)-independent hydrolysis of activated Ala-AMP. The other activity is designated 'posttransfer' editing and involves deacylation of mischarged Ala-tRNA(Pro). The misacylated Cys-tRNA(Pro) is not edited by ProRS. The sequence is that of Proline--tRNA ligase from Halorhodospira halophila (strain DSM 244 / SL1) (Ectothiorhodospira halophila (strain DSM 244 / SL1)).